A 353-amino-acid chain; its full sequence is Draxin-B (353 aa).

Positions 1–21 are cleaved as a signal peptide; that stretch reads MASSWCLPLALLVSNLAVSHS. Disordered stretches follow at residues 23–183, 198–222, and 246–268; these read EPSS…KEGS, TVMS…RGKV, and VDAW…SGNV. Over residues 138–167 the composition is skewed to basic residues; the sequence is GPHKGKAQGHGHHFDHRRHGGRRDKGRHTK. The segment covering 252-261 has biased composition (basic residues); it reads SRKKDKRRSK. N-linked (GlcNAc...) asparagine glycosylation is found at Asn-262 and Asn-267.

Belongs to the draxin family.

It is found in the secreted. Functionally, chemorepulsive axon guidance protein required for the development of spinal cord and forebrain commissures. Acts as a chemorepulsive guidance protein for commissural axons during development. Able to inhibit or repel neurite outgrowth from dorsal spinal cord. This chain is Draxin-B (draxin-B), found in Salmo salar (Atlantic salmon).